Here is a 132-residue protein sequence, read N- to C-terminus: Small ribosomal subunit protein uS8 (132 aa).

This sequence belongs to the universal ribosomal protein uS8 family. Part of the 30S ribosomal subunit. Contacts proteins S5 and S12.

Its function is as follows. One of the primary rRNA binding proteins, it binds directly to 16S rRNA central domain where it helps coordinate assembly of the platform of the 30S subunit. The polypeptide is Small ribosomal subunit protein uS8 (Staphylococcus aureus (strain USA300)).